The primary structure comprises 286 residues: ATP phosphoribosyltransferase (286 aa).

Belongs to the ATP phosphoribosyltransferase family. Long subfamily. Mg(2+) serves as cofactor.

Its subcellular location is the cytoplasm. It carries out the reaction 1-(5-phospho-beta-D-ribosyl)-ATP + diphosphate = 5-phospho-alpha-D-ribose 1-diphosphate + ATP. It participates in amino-acid biosynthesis; L-histidine biosynthesis; L-histidine from 5-phospho-alpha-D-ribose 1-diphosphate: step 1/9. Its activity is regulated as follows. Feedback inhibited by histidine. Its function is as follows. Catalyzes the condensation of ATP and 5-phosphoribose 1-diphosphate to form N'-(5'-phosphoribosyl)-ATP (PR-ATP). Has a crucial role in the pathway because the rate of histidine biosynthesis seems to be controlled primarily by regulation of HisG enzymatic activity. In Paenarthrobacter aurescens (strain TC1), this protein is ATP phosphoribosyltransferase.